Consider the following 91-residue polypeptide: Potassium channel toxin MeuTXK-beta-1 (91 aa).

The signal sequence occupies residues 1-19; the sequence is MQRNLVVLLFLGMVALSSC. A BetaSPN-type CS-alpha/beta domain is found at 54–91; sequence QFGCPAYQGYCDDHCQDIEKKEGFCHGFKCKCGIPMGF. Disulfide bonds link Cys57–Cys78, Cys64–Cys83, and Cys68–Cys85.

As to expression, expressed by the venom gland.

Its subcellular location is the secreted. Functionally, has a low affinity binding to potassium channels of rat brain synaptosomes. Displays weak antibacterial activity against Stenotrophomonas sp. Strongly inhibits the development of the Plasmodium berghei ookinetes. Displays slight hemolytic effect on mouse erythrocytes. Induces cytolysis on Xenopus oocytes at high concentrations. Is not toxic towards mice and towards the insect Tenebrio molitor. The sequence is that of Potassium channel toxin MeuTXK-beta-1 from Mesobuthus eupeus (Lesser Asian scorpion).